The following is a 503-amino-acid chain: Maturase K (503 aa).

This sequence belongs to the intron maturase 2 family. MatK subfamily.

It localises to the plastid. The protein localises to the chloroplast. Functionally, usually encoded in the trnK tRNA gene intron. Probably assists in splicing its own and other chloroplast group II introns. The protein is Maturase K of Backhousia myrtifolia (Grey myrtle).